Consider the following 346-residue polypeptide: S-adenosylmethionine:tRNA ribosyltransferase-isomerase (346 aa).

This sequence belongs to the QueA family. Monomer.

The protein resides in the cytoplasm. The enzyme catalyses 7-aminomethyl-7-carbaguanosine(34) in tRNA + S-adenosyl-L-methionine = epoxyqueuosine(34) in tRNA + adenine + L-methionine + 2 H(+). Its pathway is tRNA modification; tRNA-queuosine biosynthesis. In terms of biological role, transfers and isomerizes the ribose moiety from AdoMet to the 7-aminomethyl group of 7-deazaguanine (preQ1-tRNA) to give epoxyqueuosine (oQ-tRNA). The protein is S-adenosylmethionine:tRNA ribosyltransferase-isomerase of Neisseria meningitidis serogroup C (strain 053442).